The sequence spans 357 residues: Actin, macronuclear (357 aa).

The protein belongs to the actin family. Met-1 may be removed after translation.

Its subcellular location is the cytoplasm. It localises to the cytoskeleton. The catalysed reaction is ATP + H2O = ADP + phosphate + H(+). In terms of biological role, actins are highly conserved proteins that are involved in various types of cell motility and are ubiquitously expressed in all eukaryotic cells. This Oxytricha fallax protein is Actin, macronuclear.